We begin with the raw amino-acid sequence, 411 residues long: Tyrosine--tRNA ligase (411 aa).

Residue Y33 participates in L-tyrosine binding. The short motif at 38 to 47 (PTAESLHLGN) is the 'HIGH' region element. Residues Y160 and Q164 each contribute to the L-tyrosine site. A 'KMSKS' region motif is present at residues 222–226 (KIGKS). K225 contributes to the ATP binding site. One can recognise an S4 RNA-binding domain in the interval 347–411 (SVIETLIKNK…KKQVILFKTV (65 aa)).

The protein belongs to the class-I aminoacyl-tRNA synthetase family. TyrS type 1 subfamily. As to quaternary structure, homodimer.

The protein resides in the cytoplasm. It catalyses the reaction tRNA(Tyr) + L-tyrosine + ATP = L-tyrosyl-tRNA(Tyr) + AMP + diphosphate + H(+). Its function is as follows. Catalyzes the attachment of tyrosine to tRNA(Tyr) in a two-step reaction: tyrosine is first activated by ATP to form Tyr-AMP and then transferred to the acceptor end of tRNA(Tyr). This is Tyrosine--tRNA ligase from Mycoplasmopsis agalactiae (strain NCTC 10123 / CIP 59.7 / PG2) (Mycoplasma agalactiae).